The primary structure comprises 127 residues: V-type proton ATPase subunit F (127 aa).

This sequence belongs to the V-ATPase F subunit family. In terms of assembly, V-ATPase is a heteromultimeric enzyme made up of two complexes: the ATP-hydrolytic V1 complex and the proton translocation V0 complex. The V1 complex consists of three catalytic AB heterodimers that form a heterohexamer, three peripheral stalks each consisting of EG heterodimers, one central rotor including subunits D and F, and the regulatory subunits C and H. The proton translocation complex V0 consists of the proton transport subunit a, a ring of proteolipid subunits c9c'', rotary subunit d, subunits e and f, and the accessory subunits VhaAC45 and ATP6AP2.

In terms of biological role, subunit of the V1 complex of vacuolar(H+)-ATPase (V-ATPase), a multisubunit enzyme composed of a peripheral complex (V1) that hydrolyzes ATP and a membrane integral complex (V0) that translocates protons. V-ATPase is responsible for acidifying and maintaining the pH of intracellular compartments and in some cell types, is targeted to the plasma membrane, where it is responsible for acidifying the extracellular environment. In Aedes aegypti (Yellowfever mosquito), this protein is V-type proton ATPase subunit F.